The sequence spans 1755 residues: Transposon TyH3 Gag-Pol polyprotein (1755 aa).

Polar residues-rich tracts occupy residues 1-23 (MESQ…SVTS), 48-60 (TKAN…TPAS), and 127-152 (QSQF…GNTF). Disordered stretches follow at residues 1-93 (MESQ…MMTQ), 126-173 (PQSQ…RPPP), and 352-421 (GSRN…SKST). Over residues 153-165 (TDSSSADSDMTST) the composition is skewed to low complexity. Residues 299–401 (NNGIHINNKV…NSKSKTARAH (103 aa)) form an RNA-binding region. Residues 402-418 (NVSTSNNSPSTDNDSIS) are compositionally biased toward low complexity. S416 carries the post-translational modification Phosphoserine. The active-site For protease activity; shared with dimeric partner is the D461. The interval 583–640 (NVHTSESTRKYPYPFIHRMLAHANAQTIRYSLKNNTITYFNESDVDWSSAIDYQCPDC) is integrase-type zinc finger-like. The region spanning 660–835 (NSYEPFQYLH…AGLDISTLLP (176 aa)) is the Integrase catalytic domain. D671 and D736 together coordinate Mg(2+). Disordered regions lie at residues 956–1087 (SKAV…ETEK), 1092–1111 (RSPS…NIVP), and 1130–1187 (DLPL…DNET). Residues 960-969 (SPTDSTPPST) are compositionally biased toward low complexity. The segment covering 1005–1015 (STPQISNIEST) has biased composition (polar residues). A compositionally biased stretch (basic and acidic residues) spans 1038–1053 (ESSHASKSKDFRHSDS). Polar residues-rich tracts occupy residues 1054-1082 (YSEN…QISD) and 1101-1111 (PENNSSHNIVP). A Bipartite nuclear localization signal motif is present at residues 1178–1212 (KKRSLEDNETEIKVSRDTWNTKNMRSLEPPRSKKR). The 139-residue stretch at 1338-1476 (NNYYITQLDI…DILGLEIKYQ (139 aa)) folds into the Reverse transcriptase Ty1/copia-type domain. 6 residues coordinate Mg(2+): D1346, D1427, D1428, D1610, E1652, and D1685. An RNase H Ty1/copia-type domain is found at 1610 to 1752 (DASYGNQPYY…IKTFKLLTNK (143 aa)).

The capsid protein forms a homotrimer, from which the VLPs are assembled. The protease is a homodimer, whose active site consists of two apposed aspartic acid residues. Initially, virus-like particles (VLPs) are composed of the structural unprocessed proteins Gag and Gag-Pol, and also contain the host initiator methionine tRNA (tRNA(i)-Met) which serves as a primer for minus-strand DNA synthesis, and a dimer of genomic Ty RNA. Processing of the polyproteins occurs within the particle and proceeds by an ordered pathway, called maturation. First, the protease (PR) is released by autocatalytic cleavage of the Gag-Pol polyprotein yielding capsid protein p45 and a Pol-p154 precursor protein. This cleavage is a prerequisite for subsequent processing of Pol-p154 at the remaining sites to release the mature structural and catalytic proteins. Maturation takes place prior to the RT reaction and is required to produce transposition-competent VLPs.

Its subcellular location is the cytoplasm. The protein localises to the nucleus. It catalyses the reaction DNA(n) + a 2'-deoxyribonucleoside 5'-triphosphate = DNA(n+1) + diphosphate. The enzyme catalyses Endonucleolytic cleavage to 5'-phosphomonoester.. In terms of biological role, capsid protein (CA) is the structural component of the virus-like particle (VLP), forming the shell that encapsulates the retrotransposons dimeric RNA genome. The particles are assembled from trimer-clustered units and there are holes in the capsid shells that allow for the diffusion of macromolecules. CA also has nucleocapsid-like chaperone activity, promoting primer tRNA(i)-Met annealing to the multipartite primer-binding site (PBS), dimerization of Ty1 RNA and initiation of reverse transcription. Functionally, the aspartyl protease (PR) mediates the proteolytic cleavages of the Gag and Gag-Pol polyproteins after assembly of the VLP. Reverse transcriptase/ribonuclease H (RT) is a multifunctional enzyme that catalyzes the conversion of the retro-elements RNA genome into dsDNA within the VLP. The enzyme displays a DNA polymerase activity that can copy either DNA or RNA templates, and a ribonuclease H (RNase H) activity that cleaves the RNA strand of RNA-DNA heteroduplexes during plus-strand synthesis and hydrolyzes RNA primers. The conversion leads to a linear dsDNA copy of the retrotransposon that includes long terminal repeats (LTRs) at both ends. Its function is as follows. Integrase (IN) targets the VLP to the nucleus, where a subparticle preintegration complex (PIC) containing at least integrase and the newly synthesized dsDNA copy of the retrotransposon must transit the nuclear membrane. Once in the nucleus, integrase performs the integration of the dsDNA into the host genome. This Saccharomyces cerevisiae (Baker's yeast) protein is Transposon TyH3 Gag-Pol polyprotein (TY1B).